The sequence spans 338 residues: MSLPALQNSAVFYRRIINRFPQDFSLAFAYGSAVFRQTGSSQGHMVKNMLDFVFAVDDPVTWHTMNLIENRKHYSFLRFLGPKQISSIQSDYGAGVYFNTLVPAEDRLIKYGVISTDALIDDLLHWKTLYVAGRLHKPVRILLQSENGNLRSALLGNLKSAVIASFLMLPESFSEEELYLQIAGLSYSGDFRMVFGEDKSKVSNIVKDNMQHFRQLYNRILQECPQVVYKPQQGRLEVDKSPEGQFTQLMALPRTLQQQITRLVDRPGKNRDVEEILLQVAQDPDCGSVVQQGISSIVKSSSITQSAKGIATAGLVKTVSYSTKKLQKMWRGWRRKPA.

It belongs to the TAM41 family. Requires Mg(2+) as cofactor.

The protein localises to the mitochondrion inner membrane. It catalyses the reaction a 1,2-diacyl-sn-glycero-3-phosphate + CTP + H(+) = a CDP-1,2-diacyl-sn-glycerol + diphosphate. The protein operates within phospholipid metabolism; CDP-diacylglycerol biosynthesis; CDP-diacylglycerol from sn-glycerol 3-phosphate: step 3/3. Its function is as follows. Catalyzes the conversion of phosphatidic acid (PA) to CDP-diacylglycerol (CDP-DAG), an essential intermediate in the synthesis of phosphatidylglycerol, cardiolipin and phosphatidylinositol. The chain is Phosphatidate cytidylyltransferase, mitochondrial (tamm41) from Danio rerio (Zebrafish).